The primary structure comprises 100 residues: Large ribosomal subunit protein eL36B (100 aa).

This sequence belongs to the eukaryotic ribosomal protein eL36 family. In terms of assembly, component of the large ribosomal subunit (LSU). Mature yeast ribosomes consist of a small (40S) and a large (60S) subunit. The 40S small subunit contains 1 molecule of ribosomal RNA (18S rRNA) and 33 different proteins (encoded by 57 genes). The large 60S subunit contains 3 rRNA molecules (25S, 5.8S and 5S rRNA) and 46 different proteins (encoded by 81 genes).

The protein resides in the cytoplasm. Its function is as follows. Component of the ribosome, a large ribonucleoprotein complex responsible for the synthesis of proteins in the cell. The small ribosomal subunit (SSU) binds messenger RNAs (mRNAs) and translates the encoded message by selecting cognate aminoacyl-transfer RNA (tRNA) molecules. The large subunit (LSU) contains the ribosomal catalytic site termed the peptidyl transferase center (PTC), which catalyzes the formation of peptide bonds, thereby polymerizing the amino acids delivered by tRNAs into a polypeptide chain. The nascent polypeptides leave the ribosome through a tunnel in the LSU and interact with protein factors that function in enzymatic processing, targeting, and the membrane insertion of nascent chains at the exit of the ribosomal tunnel. The polypeptide is Large ribosomal subunit protein eL36B (Saccharomyces cerevisiae (strain ATCC 204508 / S288c) (Baker's yeast)).